Reading from the N-terminus, the 397-residue chain is Chorismate synthase (397 aa).

Arg40 and Arg46 together coordinate NADP(+). FMN contacts are provided by residues 129 to 131 (RSS), 257 to 258 (QA), Gly302, 317 to 321 (KPISS), and Arg343.

Belongs to the chorismate synthase family. Homotetramer. It depends on FMNH2 as a cofactor.

It carries out the reaction 5-O-(1-carboxyvinyl)-3-phosphoshikimate = chorismate + phosphate. The protein operates within metabolic intermediate biosynthesis; chorismate biosynthesis; chorismate from D-erythrose 4-phosphate and phosphoenolpyruvate: step 7/7. Its function is as follows. Catalyzes the anti-1,4-elimination of the C-3 phosphate and the C-6 proR hydrogen from 5-enolpyruvylshikimate-3-phosphate (EPSP) to yield chorismate, which is the branch point compound that serves as the starting substrate for the three terminal pathways of aromatic amino acid biosynthesis. This reaction introduces a second double bond into the aromatic ring system. This Chlorobium phaeobacteroides (strain DSM 266 / SMG 266 / 2430) protein is Chorismate synthase.